Here is a 154-residue protein sequence, read N- to C-terminus: 6,7-dimethyl-8-ribityllumazine synthase (154 aa).

Residues Phe22, 56–58 (AFE), and 80–82 (AVI) contribute to the 5-amino-6-(D-ribitylamino)uracil site. Residue 85 to 86 (ET) coordinates (2S)-2-hydroxy-3-oxobutyl phosphate. The Proton donor role is filled by His88. Residue Phe113 participates in 5-amino-6-(D-ribitylamino)uracil binding. Residue Arg127 coordinates (2S)-2-hydroxy-3-oxobutyl phosphate.

The protein belongs to the DMRL synthase family.

It catalyses the reaction (2S)-2-hydroxy-3-oxobutyl phosphate + 5-amino-6-(D-ribitylamino)uracil = 6,7-dimethyl-8-(1-D-ribityl)lumazine + phosphate + 2 H2O + H(+). It functions in the pathway cofactor biosynthesis; riboflavin biosynthesis; riboflavin from 2-hydroxy-3-oxobutyl phosphate and 5-amino-6-(D-ribitylamino)uracil: step 1/2. Catalyzes the formation of 6,7-dimethyl-8-ribityllumazine by condensation of 5-amino-6-(D-ribitylamino)uracil with 3,4-dihydroxy-2-butanone 4-phosphate. This is the penultimate step in the biosynthesis of riboflavin. The protein is 6,7-dimethyl-8-ribityllumazine synthase of Thermoanaerobacter pseudethanolicus (strain ATCC 33223 / 39E) (Clostridium thermohydrosulfuricum).